Reading from the N-terminus, the 223-residue chain is Neurotrophic factor BDNF precursor form (223 aa).

The first 5 residues, 1–5 (SCMKA), serve as a signal peptide directing secretion. Residues 6 to 114 (APMKEVSIRG…AANMSMRVRR (109 aa)) constitute a propeptide that is removed on maturation. Asn107 carries an N-linked (GlcNAc...) asparagine glycan. Cystine bridges form between Cys127–Cys194 and Cys172–Cys223.

It belongs to the NGF-beta family.

The protein localises to the secreted. Promotes the survival of neuronal populations that are all located either in the central nervous system or directly connected to it. The sequence is that of Neurotrophic factor BDNF precursor form (BDNF) from Candoia carinata (Papuan tree boa).